Here is a 302-residue protein sequence, read N- to C-terminus: ATP synthase gamma chain (302 aa).

This sequence belongs to the ATPase gamma chain family. In terms of assembly, F-type ATPases have 2 components, CF(1) - the catalytic core - and CF(0) - the membrane proton channel. CF(1) has five subunits: alpha(3), beta(3), gamma(1), delta(1), epsilon(1). CF(0) has three main subunits: a, b and c.

It is found in the cell membrane. Produces ATP from ADP in the presence of a proton gradient across the membrane. The gamma chain is believed to be important in regulating ATPase activity and the flow of protons through the CF(0) complex. This is ATP synthase gamma chain from Kineococcus radiotolerans (strain ATCC BAA-149 / DSM 14245 / SRS30216).